The chain runs to 473 residues: Laccase-3 (473 aa).

A signal peptide spans M1–A21. Plastocyanin-like domains are found at residues I23–Y148 and V160–Y298. A glycan (N-linked (GlcNAc...) asparagine) is linked at N75. H85, H87, H130, and H132 together coordinate Cu cation. Intrachain disulfides connect C106–C462 and C138–C221. Residues N226, N283, N309, N346, N350, and N374 are each glycosylated (N-linked (GlcNAc...) asparagine). The Plastocyanin-like 3 domain occupies T365–D444. Cu cation-binding residues include H410, H413, H415, H426, C427, H428, and H432. N-linked (GlcNAc...) asparagine glycosylation is present at N470.

It belongs to the multicopper oxidase family. In terms of assembly, homodimer. Cu cation is required as a cofactor.

It is found in the secreted. The catalysed reaction is 4 hydroquinone + O2 = 4 benzosemiquinone + 2 H2O. Lignin degradation and detoxification of lignin-derived products. This Trametes villosa (White-rot fungus) protein is Laccase-3 (LCC3).